The sequence spans 390 residues: Galactokinase (390 aa).

33–36 (EHTD) is a substrate binding site. Residues Ser-67 and 124 to 130 (GSGLSSS) contribute to the ATP site. 2 residues coordinate Mg(2+): Ser-130 and Glu-162. Asp-174 acts as the Proton acceptor in catalysis. Tyr-224 lines the substrate pocket.

The protein belongs to the GHMP kinase family. GalK subfamily.

It is found in the cytoplasm. The catalysed reaction is alpha-D-galactose + ATP = alpha-D-galactose 1-phosphate + ADP + H(+). It functions in the pathway carbohydrate metabolism; galactose metabolism. Functionally, catalyzes the transfer of the gamma-phosphate of ATP to D-galactose to form alpha-D-galactose-1-phosphate (Gal-1-P). This is Galactokinase from Streptococcus suis (strain 05ZYH33).